The following is a 487-amino-acid chain: Complement C1r subcomponent-like protein (487 aa).

The first 35 residues, 1-35 (MPGPRVWGKYLWRSPHSKGCPGAMWWLLLWGVLQA), serve as a signal peptide directing secretion. The CUB domain maps to 39-163 (RGSVLLAQEL…KGFLALYQTV (125 aa)). Residues Cys-94 and Cys-112 are joined by a disulfide bond. N-linked (GlcNAc...) asparagine glycans are attached at residues Asn-147 and Asn-166. The 66-residue stretch at 165–230 (VNYSQPISEA…DGEEVLQCMP (66 aa)) folds into the Sushi domain. Cysteines 195 and 228 form a disulfide. The N-linked (GlcNAc...) (complex) asparagine glycan is linked to Asn-242. The Peptidase S1 domain occupies 245–484 (TLGSSRAKLG…YVDWIKGVMN (240 aa)). The Charge relay system role is filled by His-283. Asn-296 carries N-linked (GlcNAc...) asparagine glycosylation. Asp-339 serves as the catalytic Charge relay system. The N-linked (GlcNAc...) asparagine glycan is linked to Asn-363. 2 disulfide bridges follow: Cys-402–Cys-421 and Cys-432–Cys-462. Ser-436 functions as the Charge relay system in the catalytic mechanism.

This sequence belongs to the peptidase S1 family. As to expression, highly expressed in placenta, liver, kidney, pancreas, moderately in lung, spleen, prostate, ovary, colon, and PBL, and weakly in heart, skeletal muscle, thymus, testis, and small intestine. Expressed in PC-3 (prostate adenocarcinoma) and SK-OV-3 (ovary adenocarcinoma) cells, but not in LoVo and HT-29 (colon adenocarcinoma), SMMC7721 (hepatocellular carcinoma), CaoV-3 (ovary adenocarcinoma), HeLa (cervix epithelioid carcinoma), MCF-7 (breast adenocarcinoma), U-251MG (glioma) or A-549 (lung carcinoma) cells. Widely expressed in myeloid leukemia cell lines, including K-562 (chronic myelogenous leukemia), THP-1 (myelomonocytic leukemia), HL-60 and NB4 (promyelocytic leukemia), and KG-1 (acute myelogenous leukemia) cells. Expressed mainly in the liver and in serum (at protein level).

It is found in the secreted. In terms of biological role, mediates the proteolytic cleavage of HP/haptoglobin in the endoplasmic reticulum. This is Complement C1r subcomponent-like protein (C1RL) from Homo sapiens (Human).